The chain runs to 107 residues: Thioredoxin (107 aa).

Residues 2 to 107 form the Thioredoxin domain; that stretch reads VVHIENLNAF…TLKQKINDHK (106 aa). Catalysis depends on nucleophile residues C32 and C35. A disulfide bridge links C32 with C35. S-nitrosocysteine is present on residues C71 and C75.

Belongs to the thioredoxin family. May be nitrosylated on several cysteine residues, depending on the oxidation state. Nitrosylated Cys-75 may serve as donor for nitrosylation of target proteins.

It is found in the nucleus. It localises to the cytoplasm. Its subcellular location is the secreted. In terms of biological role, participates in various redox reactions through the reversible oxidation of its active center dithiol to a disulfide and catalyzes dithiol-disulfide exchange reactions. Plays a role in the reversible S-nitrosylation of cysteine residues in target proteins, and thereby contributes to the response to intracellular nitric oxide. Nitrosylates the active site Cys of CASP3 in response to nitric oxide (NO), and thereby inhibits caspase-3 activity. Induces the FOS/JUN AP-1 DNA binding activity in ionizing radiation (IR) cells through its oxidation/reduction status and stimulates AP-1 transcriptional activity. The protein is Thioredoxin (txn) of Ictalurus punctatus (Channel catfish).